A 312-amino-acid chain; its full sequence is UDP-N-acetylenolpyruvoylglucosamine reductase (312 aa).

Residues 24 to 206 (GIGGPADLFA…SADILKVRNE (183 aa)) form the FAD-binding PCMH-type domain. Residue arginine 166 is part of the active site. Serine 217 serves as the catalytic Proton donor. Glutamate 307 is an active-site residue.

The protein belongs to the MurB family. It depends on FAD as a cofactor.

The protein resides in the cytoplasm. It catalyses the reaction UDP-N-acetyl-alpha-D-muramate + NADP(+) = UDP-N-acetyl-3-O-(1-carboxyvinyl)-alpha-D-glucosamine + NADPH + H(+). The protein operates within cell wall biogenesis; peptidoglycan biosynthesis. Cell wall formation. The chain is UDP-N-acetylenolpyruvoylglucosamine reductase from Solibacter usitatus (strain Ellin6076).